Here is a 279-residue protein sequence, read N- to C-terminus: Presqualene diphosphate synthase (279 aa).

It belongs to the phytoene/squalene synthase family. HpnD subfamily.

It carries out the reaction 2 (2E,6E)-farnesyl diphosphate = presqualene diphosphate + diphosphate. Its pathway is secondary metabolite biosynthesis; hopanoid biosynthesis. Involved in the biosynthesis of the hopanoid precursor squalene (SQ) from farnesyl diphosphate (FPP). Catalyzes the first step, the formation of presqualene diphosphate (PSPP) from two molecules of FPP. This is Presqualene diphosphate synthase from Rhodopseudomonas palustris (strain ATCC BAA-98 / CGA009).